The sequence spans 290 residues: Acetyl-coenzyme A carboxylase carboxyl transferase subunit beta (290 aa).

In terms of domain architecture, CoA carboxyltransferase N-terminal spans 28–290 (IMTKCPKCKK…TGGEYEWLQD (263 aa)). Zn(2+) is bound by residues C32, C35, C51, and C54. The C4-type zinc finger occupies 32 to 54 (CPKCKKIMLTKELDKNLRVCMNC).

Belongs to the AccD/PCCB family. In terms of assembly, acetyl-CoA carboxylase is a heterohexamer composed of biotin carboxyl carrier protein (AccB), biotin carboxylase (AccC) and two subunits each of ACCase subunit alpha (AccA) and ACCase subunit beta (AccD). Requires Zn(2+) as cofactor.

Its subcellular location is the cytoplasm. The catalysed reaction is N(6)-carboxybiotinyl-L-lysyl-[protein] + acetyl-CoA = N(6)-biotinyl-L-lysyl-[protein] + malonyl-CoA. The protein operates within lipid metabolism; malonyl-CoA biosynthesis; malonyl-CoA from acetyl-CoA: step 1/1. Functionally, component of the acetyl coenzyme A carboxylase (ACC) complex. Biotin carboxylase (BC) catalyzes the carboxylation of biotin on its carrier protein (BCCP) and then the CO(2) group is transferred by the transcarboxylase to acetyl-CoA to form malonyl-CoA. This is Acetyl-coenzyme A carboxylase carboxyl transferase subunit beta from Bacillus velezensis (strain DSM 23117 / BGSC 10A6 / LMG 26770 / FZB42) (Bacillus amyloliquefaciens subsp. plantarum).